The sequence spans 160 residues: Heat shock protein beta-6 (160 aa).

The interval 1-72 is involved in stabilization of the HSPB1:HSBP6 heterodimer; it reads MEIPVPVQPS…PVAQVPTDPG (72 aa). S16 bears the Phosphoserine; by PKA mark. The sHSP domain maps to 55–160; sequence LRAPSVALPV…AQAPPPAAAK (106 aa). Residue Q66 is modified to Deamidated glutamine.

The protein belongs to the small heat shock protein (HSP20) family. Homodimer. Small heat shock proteins form high molecular mass oligomers containing variable number of monomers; these oligomers display a very flexible quaternary structure easily exchanging their subunits. Heterooligomer with HSPB1; formed through oligomerization of HSPB1:HSBP6 dimers; subunit exchange leads to formation of at least two different heterooligomeric complexes, differing in variable quantities of HSPB1 and HSPB6 homodimers in addition to HSPB1:HSPB6 heterodimers. Heterooligomer with CRYAB; large heterooligomers consist of CRYAB homodimers and HSPB5:HSPB6 heterodimers but lacking HSPB6 homodimers. Interacts with BAG3. Interacts (phosphorylated) with YWHAZ. Interacts with PDE4A and PDE4D; required for maintenance of the non-phosphorylated state of HSPB6 under basal conditions. Interacts with KDR. Interacts with PRKD1. Post-translationally, the N-terminus is blocked. In terms of processing, phosphorylated at Ser-16 by PKA and probably PKD1K; required to protect cardiomyocytes from apoptosis.

The protein localises to the cytoplasm. The protein resides in the nucleus. It is found in the secreted. Its function is as follows. Small heat shock protein which functions as a molecular chaperone probably maintaining denatured proteins in a folding-competent state. Seems to have versatile functions in various biological processes. Plays a role in regulating muscle function such as smooth muscle vasorelaxation and cardiac myocyte contractility. May regulate myocardial angiogenesis implicating KDR. Overexpression mediates cardioprotection and angiogenesis after induced damage. Stabilizes monomeric YWHAZ thereby supporting YWHAZ chaperone-like activity. The sequence is that of Heat shock protein beta-6 (HSPB6) from Homo sapiens (Human).